The sequence spans 470 residues: Transcriptional activator PmfR (470 aa).

As to quaternary structure, forms oligomers in solution, probably homotetramers.

It functions in the pathway alkaloid degradation; nicotine degradation [regulation]. In terms of biological role, transcriptional regulator involved in the activation of the purU-mabO-folD-nepA-nepB and mao-ORF55-nbr operons implicated in the nicotine catabolic pathway. The sequence GTTT-14 bp-AAAC seems to be the core binding site of the regulator upstream of the -35 promoter region of the operon. In Paenarthrobacter nicotinovorans (Arthrobacter nicotinovorans), this protein is Transcriptional activator PmfR (pmfR).